Here is a 147-residue protein sequence, read N- to C-terminus: Globin (147 aa).

The 147-residue stretch at 1 to 147 (GLDGAQKTAL…LLTMLIKAHV (147 aa)) folds into the Globin domain. Heme b contacts are provided by histidine 66 and histidine 98.

It belongs to the globin family. In terms of assembly, homodimer.

The protein resides in the cytoplasm. The chain is Globin from Busycotypus canaliculatus (Channeled whelk).